A 342-amino-acid chain; its full sequence is Hydrogenase expression/formation protein HupV (342 aa).

It belongs to the HupK family.

The polypeptide is Hydrogenase expression/formation protein HupV (hupV) (Azotobacter chroococcum mcd 1).